Consider the following 155-residue polypeptide: Large-conductance mechanosensitive channel (155 aa).

Helical transmembrane passes span 16–36 (VVDM…VNNL), 40–60 (VILP…LYII), and 88–108 (GVFL…FLLV).

It belongs to the MscL family. Homopentamer.

The protein localises to the cell inner membrane. In terms of biological role, channel that opens in response to stretch forces in the membrane lipid bilayer. May participate in the regulation of osmotic pressure changes within the cell. This is Large-conductance mechanosensitive channel from Chlorobium chlorochromatii (strain CaD3).